The sequence spans 160 residues: MAPKGSQRVVNKIVAENRKARFNYEIIDTYEAGLVLTGTEVKSLREGKANIAESYASDEGDEIWLINSHLPEYLQANRFNHEPRRRRKLLLNKREINRLRAGINRDGMTLVPLKVYFNEKGRAKLELALAKGKKLHDKRETEKERDWNRQKSRLLKGNSQ.

Residues 133–160 (KKLHDKRETEKERDWNRQKSRLLKGNSQ) form a disordered region. Residues 137-149 (DKRETEKERDWNR) are compositionally biased toward basic and acidic residues.

This sequence belongs to the SmpB family.

The protein resides in the cytoplasm. Required for rescue of stalled ribosomes mediated by trans-translation. Binds to transfer-messenger RNA (tmRNA), required for stable association of tmRNA with ribosomes. tmRNA and SmpB together mimic tRNA shape, replacing the anticodon stem-loop with SmpB. tmRNA is encoded by the ssrA gene; the 2 termini fold to resemble tRNA(Ala) and it encodes a 'tag peptide', a short internal open reading frame. During trans-translation Ala-aminoacylated tmRNA acts like a tRNA, entering the A-site of stalled ribosomes, displacing the stalled mRNA. The ribosome then switches to translate the ORF on the tmRNA; the nascent peptide is terminated with the 'tag peptide' encoded by the tmRNA and targeted for degradation. The ribosome is freed to recommence translation, which seems to be the essential function of trans-translation. In Agrobacterium fabrum (strain C58 / ATCC 33970) (Agrobacterium tumefaciens (strain C58)), this protein is SsrA-binding protein.